A 136-amino-acid polypeptide reads, in one-letter code: Large ribosomal subunit protein uL16 (136 aa).

It belongs to the universal ribosomal protein uL16 family. In terms of assembly, part of the 50S ribosomal subunit.

Binds 23S rRNA and is also seen to make contacts with the A and possibly P site tRNAs. The chain is Large ribosomal subunit protein uL16 from Shewanella sediminis (strain HAW-EB3).